We begin with the raw amino-acid sequence, 531 residues long: Serine-type carboxypeptidase F (531 aa).

An N-terminal signal peptide occupies residues 1–25 (MLFRSLLSTAVLAVSLCTDNASAAK). Asn-20 is a glycosylation site (N-linked (GlcNAc...) asparagine). The propeptide occupies 26–52 (HGRFGQKARDAMNIAKRSANAVKHSLK). N-linked (GlcNAc...) asparagine glycosylation is found at Asn-63, Asn-94, and Asn-155. Ser-211 is a catalytic residue. Asn-228, Asn-271, Asn-309, and Asn-378 each carry an N-linked (GlcNAc...) asparagine glycan. Asp-430 is a catalytic residue. Asn-436 and Asn-444 each carry an N-linked (GlcNAc...) asparagine glycan. Residue His-507 is part of the active site.

This sequence belongs to the peptidase S10 family. As to quaternary structure, monomer.

Inhibited by DFP, and Hg(Cl)2. Its function is as follows. Removes any amino acid from the C-terminus of a long peptide. Digests preferentially peptides containing a positively charged residue in P1' position, as well as arginine, lysine or phenylalanine in P1 position of ester substrate. Also catalyzes peptide synthesis. This is Serine-type carboxypeptidase F (pepF) from Aspergillus niger.